The following is a 388-amino-acid chain: L-lactate dehydrogenase (388 aa).

An FMN hydroxy acid dehydrogenase domain is found at 1–380; it reads MIISSSSDYR…SRDSLVREIE (380 aa). Tyrosine 24 provides a ligand contact to substrate. FMN contacts are provided by serine 106 and glutamine 127. Position 129 (tyrosine 129) interacts with substrate. FMN is bound at residue threonine 155. Arginine 164 provides a ligand contact to substrate. Lysine 251 contributes to the FMN binding site. Residue histidine 275 is the Proton acceptor of the active site. A substrate-binding site is contributed by arginine 278. An FMN-binding site is contributed by 306-330; the sequence is DSGIRSGLDVVRMLAQGADGVLLGR.

The protein belongs to the FMN-dependent alpha-hydroxy acid dehydrogenase family. Requires FMN as cofactor.

It localises to the cell inner membrane. The catalysed reaction is (S)-lactate + A = pyruvate + AH2. In terms of biological role, catalyzes the conversion of L-lactate to pyruvate. Is coupled to the respiratory chain. The polypeptide is L-lactate dehydrogenase (Xanthobacter autotrophicus (strain ATCC BAA-1158 / Py2)).